Consider the following 602-residue polypeptide: Elongation factor 4 (602 aa).

The tr-type G domain maps to 7 to 189; sequence KYIRNFSIVA…AIVNKVPAPD (183 aa). GTP-binding positions include 19 to 24 and 136 to 139; these read DHGKST and NKID.

This sequence belongs to the TRAFAC class translation factor GTPase superfamily. Classic translation factor GTPase family. LepA subfamily.

It is found in the cell membrane. The enzyme catalyses GTP + H2O = GDP + phosphate + H(+). In terms of biological role, required for accurate and efficient protein synthesis under certain stress conditions. May act as a fidelity factor of the translation reaction, by catalyzing a one-codon backward translocation of tRNAs on improperly translocated ribosomes. Back-translocation proceeds from a post-translocation (POST) complex to a pre-translocation (PRE) complex, thus giving elongation factor G a second chance to translocate the tRNAs correctly. Binds to ribosomes in a GTP-dependent manner. In Clostridium botulinum (strain 657 / Type Ba4), this protein is Elongation factor 4.